The chain runs to 164 residues: Cytochrome c-type biogenesis protein CcmE (164 aa).

At 1–8 (MNPRRKSR) the chain is on the cytoplasmic side. Residues 9 to 29 (LYLAIVVLIGVALTATLMLYA) form a helical; Signal-anchor for type II membrane protein membrane-spanning segment. The Periplasmic portion of the chain corresponds to 30–164 (LRSNIDLFYT…ATPQNEGAKS (135 aa)). Heme is bound by residues His130 and Tyr134. A compositionally biased stretch (basic and acidic residues) spans 131-148 (DEKYTPPEVADAMKENHK). Residues 131–164 (DEKYTPPEVADAMKENHKGPASAYATPQNEGAKS) form a disordered region. Residues 155–164 (ATPQNEGAKS) show a composition bias toward polar residues.

Belongs to the CcmE/CycJ family.

The protein resides in the cell inner membrane. In terms of biological role, heme chaperone required for the biogenesis of c-type cytochromes. Transiently binds heme delivered by CcmC and transfers the heme to apo-cytochromes in a process facilitated by CcmF and CcmH. This chain is Cytochrome c-type biogenesis protein CcmE, found in Serratia proteamaculans (strain 568).